A 1383-amino-acid chain; its full sequence is Palladin (1383 aa).

3 disordered regions span residues 1–22 (MSGT…EESK), 52–169 (DSET…SQLC), and 183–238 (FKAA…KSPG). The span at 78-96 (HPSHKETKLGEHASRRPQD) shows a compositional bias: basic and acidic residues. Over residues 191-201 (RSPNGESSSPD) the composition is skewed to polar residues. Position 192 is a phosphoserine (Ser192). Residues 210–223 (QPSALLSASASQSP) show a composition bias toward low complexity. The Ig-like C2-type 1 domain maps to 271 to 360 (PRFIQKLRSQ…GSDTTSAEVF (90 aa)). A disulfide bridge links Cys292 with Cys344. Residue Ser401 is modified to Phosphoserine. One can recognise an Ig-like C2-type 2 domain in the interval 440–539 (PPVFTKELQN…ATSTAQLVVT (100 aa)). Residues Cys462 and Cys521 are joined by a disulfide bond. Residues 562–566 (FPPPP) form an interaction with VASP region. 3 disordered regions span residues 609–653 (ETNG…LAKP), 673–728 (AGAR…SSGS), and 740–846 (AQNL…RFGH). Ser632 is modified (phosphoserine). Thr635 is subject to Phosphothreonine. Ser641 carries the phosphoserine modification. The segment at 646 to 676 (PPPLLAKPKLDPLKLQQLQNQIRLEQEAGAR) is interaction with LASP1. Residues 676 to 696 (RQPPPAPRSAPPSPPFPPPPA) form an interaction with SORBS2, SPIN90 and SRC region. Positions 677-697 (QPPPAPRSAPPSPPFPPPPAF) are enriched in pro residues. Phosphoserine is present on residues Ser684, Ser688, and Ser728. The segment covering 745–763 (PASGHGTPASSPSSSSLPS) has biased composition (low complexity). The segment at 766–831 (SPTPRQFGRA…PPPPPPLPSP (66 aa)) is interaction with EPS8. Residues 796 to 831 (SPSPPPPPPPVFSPTAAFPVPDVFPLPPPPPPLPSP) are interaction with SORBS2, SPIN90, SRC and PFN1. Composition is skewed to pro residues over residues 797-807 (PSPPPPPPPVF) and 817-830 (DVFP…PLPS). Residues 819–823 (FPLPP) are interaction with VASP. A compositionally biased stretch (polar residues) spans 832–846 (GQASHCSSPATRFGH). Positions 833-890 (QASHCSSPATRFGHSQTPAAFLSALLPSQPPPAAVNALGLPKGVTPAGFPKKASRTAR) are interaction with ACTN. Phosphoserine is present on residues Ser893, Ser979, and Ser984. In terms of domain architecture, Ig-like C2-type 3 spans 1001 to 1085 (PFFEMKLKHY…MAANPQGRIS (85 aa)). The segment at 1096–1125 (NQRGRSPRSPSGHPHVRRPRSRSRDSGDEN) is disordered. Over residues 1098–1108 (RGRSPRSPSGH) the composition is skewed to low complexity. Ser1101, Ser1104, Ser1106, and Ser1116 each carry phosphoserine. A Phosphoserine; by PKB/AKT1 modification is found at Ser1118. Phosphoserine is present on Ser1121. Ig-like C2-type domains follow at residues 1135 to 1226 (PHFL…LVVA) and 1233 to 1324 (PPVF…ARLD). Interaction with EZR regions lie at residues 1137–1226 (FLQA…LVVA) and 1236–1326 (FIEK…LDVY). A disulfide bridge connects residues Cys1156 and Cys1208. Ser1352 is subject to Phosphoserine.

Belongs to the myotilin/palladin family. Interacts with EPS8. Interacts with LASP1. Interacts with VASP. Interacts with ACTN. Interacts with SORBS2. Interacts with PFN1. Interacts with LPP. Interacts with SPIN90. Interacts with SRC. Interacts with EZR. Interacts with RAI14. In terms of processing, phosphorylated predominantly on serines and, to a lesser extent, on tyrosines. Phosphorylation at Ser-1118 by PKB/AKT1 modulates cytoskeletal organization and cell motility. As to expression, detected in both muscle and non-muscle tissues. High expression in prostate, ovary, colon, and kidney. Not detected in spleen, skeletal muscle, lung and peripheral blood lymphocytes (at protein level). Protein is overexpressed in FA6, HPAF, IMIM-PC2, SUIT-2 and PancTu-II sporadic pancreatic cancer cell lines.

The protein localises to the cytoplasm. It localises to the cytoskeleton. It is found in the cell junction. The protein resides in the focal adhesion. Its subcellular location is the myofibril. The protein localises to the sarcomere. It localises to the z line. It is found in the cell projection. The protein resides in the ruffle. Its subcellular location is the podosome. The protein localises to the lamellipodium. It localises to the axon. It is found in the growth cone. Functionally, cytoskeletal protein required for organization of normal actin cytoskeleton. Roles in establishing cell morphology, motility, cell adhesion and cell-extracellular matrix interactions in a variety of cell types. May function as a scaffolding molecule with the potential to influence both actin polymerization and the assembly of existing actin filaments into higher-order arrays. Binds to proteins that bind to either monomeric or filamentous actin. Localizes at sites where active actin remodeling takes place, such as lamellipodia and membrane ruffles. Different isoforms may have functional differences. Involved in the control of morphological and cytoskeletal changes associated with dendritic cell maturation. Involved in targeting ACTN to specific subcellular foci. The protein is Palladin (PALLD) of Homo sapiens (Human).